The sequence spans 268 residues: Probable 6-phosphogluconolactonase 1 (268 aa).

This sequence belongs to the glucosamine/galactosamine-6-phosphate isomerase family. 6-phosphogluconolactonase subfamily.

The protein resides in the cytoplasm. It is found in the cytosol. The enzyme catalyses 6-phospho-D-glucono-1,5-lactone + H2O = 6-phospho-D-gluconate + H(+). Its pathway is carbohydrate degradation; pentose phosphate pathway; D-ribulose 5-phosphate from D-glucose 6-phosphate (oxidative stage): step 2/3. Its function is as follows. Catalyzes the hydrolysis of 6-phosphogluconolactone to 6-phosphogluconate. In Arabidopsis thaliana (Mouse-ear cress), this protein is Probable 6-phosphogluconolactonase 1.